The following is a 210-amino-acid chain: Outer-membrane lipoprotein LolB (210 aa).

An N-terminal signal peptide occupies residues 1-18 (MKKLTKLLSLTLLFALAG). Cys19 carries N-palmitoyl cysteine lipidation. Residue Cys19 is the site of S-diacylglycerol cysteine attachment.

Belongs to the LolB family. In terms of assembly, monomer.

Its subcellular location is the cell outer membrane. Its function is as follows. Plays a critical role in the incorporation of lipoproteins in the outer membrane after they are released by the LolA protein. The sequence is that of Outer-membrane lipoprotein LolB from Glaesserella parasuis serovar 5 (strain SH0165) (Haemophilus parasuis).